A 193-amino-acid polypeptide reads, in one-letter code: Adenine phosphoribosyltransferase (193 aa).

The protein belongs to the purine/pyrimidine phosphoribosyltransferase family. As to quaternary structure, homodimer.

Its subcellular location is the cytoplasm. The catalysed reaction is AMP + diphosphate = 5-phospho-alpha-D-ribose 1-diphosphate + adenine. It functions in the pathway purine metabolism; AMP biosynthesis via salvage pathway; AMP from adenine: step 1/1. Functionally, catalyzes a salvage reaction resulting in the formation of AMP, that is energically less costly than de novo synthesis. This Bifidobacterium adolescentis (strain ATCC 15703 / DSM 20083 / NCTC 11814 / E194a) protein is Adenine phosphoribosyltransferase.